Consider the following 296-residue polypeptide: Glycine N-acyltransferase (296 aa).

At K16 the chain carries N6-acetyllysine; alternate. K16 carries the post-translational modification N6-succinyllysine; alternate. N6-acetyllysine is present on K113. N6-acetyllysine; alternate is present on residues K127 and K142. Residues K127 and K142 each carry the N6-succinyllysine; alternate modification. K159 carries the N6-acetyllysine modification. K169 is modified (N6-succinyllysine). An N6-acetyllysine; alternate mark is found at K183 and K256. 2 positions are modified to N6-succinyllysine; alternate: K183 and K256. Position 267 is an N6-succinyllysine (K267).

Belongs to the glycine N-acyltransferase family.

The protein resides in the mitochondrion. It carries out the reaction an acyl-CoA + glycine = an N-acylglycine + CoA + H(+). It catalyses the reaction benzoyl-CoA + glycine = N-benzoylglycine + CoA + H(+). Mitochondrial acyltransferase which transfers an acyl group to the N-terminus of glycine and glutamine, although much less efficiently. Can conjugate a multitude of substrates to form a variety of N-acylglycines, thereby detoxify xenobiotics, such as benzoic acid or salicylic acid, and endogenous organic acids, such as isovaleric acid. The protein is Glycine N-acyltransferase (Glyat) of Rattus norvegicus (Rat).